The sequence spans 335 residues: Deoxyhypusine hydroxylase (335 aa).

HEAT-like PBS-type repeat units follow at residues 71–97, 104–130, 200–233, 238–264, and 271–298; these read LKHE…VAKD, CRHE…LRDN, LRYR…GLKD, FRHE…ALSN, and VRHE…FLND. Residues His73, Glu74, His106, and Glu107 each coordinate Fe cation. Residues His240, Glu241, His273, and Glu274 each coordinate Fe cation.

It belongs to the deoxyhypusine hydroxylase family. Fe(2+) is required as a cofactor.

The protein localises to the cytoplasm. Its subcellular location is the nucleus. The enzyme catalyses [eIF5A protein]-deoxyhypusine + AH2 + O2 = [eIF5A protein]-hypusine + A + H2O. Its pathway is protein modification; eIF5A hypusination. Functionally, catalyzes the hydroxylation of the N(6)-(4-aminobutyl)-L-lysine intermediate to form hypusine, an essential post-translational modification only found in mature eIF-5A factor. This is Deoxyhypusine hydroxylase (lia1) from Aspergillus fumigatus (strain ATCC MYA-4609 / CBS 101355 / FGSC A1100 / Af293) (Neosartorya fumigata).